A 296-amino-acid polypeptide reads, in one-letter code: GTPase Era (296 aa).

The Era-type G domain maps to 7–173; the sequence is KAGFVSIIGR…VDLVREHLPE (167 aa). Positions 15 to 22 are G1; the sequence is GRPNVGKS. 15-22 is a GTP binding site; it reads GRPNVGKS. A G2 region spans residues 41–45; sequence QTTRN. Residues 62 to 65 form a G3 region; that stretch reads DTPG. GTP-binding positions include 62 to 66 and 122 to 125; these read DTPGI and NKID. The segment at 122–125 is G4; that stretch reads NKID. Positions 152-154 are G5; the sequence is ISA. In terms of domain architecture, KH type-2 spans 204–281; that stretch reads TNREVPYGTA…YLELFVQVQE (78 aa).

This sequence belongs to the TRAFAC class TrmE-Era-EngA-EngB-Septin-like GTPase superfamily. Era GTPase family. Monomer.

It is found in the cytoplasm. Its subcellular location is the cell inner membrane. Its function is as follows. An essential GTPase that binds both GDP and GTP, with rapid nucleotide exchange. Plays a role in 16S rRNA processing and 30S ribosomal subunit biogenesis and possibly also in cell cycle regulation and energy metabolism. The chain is GTPase Era from Trichlorobacter lovleyi (strain ATCC BAA-1151 / DSM 17278 / SZ) (Geobacter lovleyi).